Here is a 153-residue protein sequence, read N- to C-terminus: Ribosomal RNA large subunit methyltransferase H (153 aa).

S-adenosyl-L-methionine-binding positions include Leu70, Gly102, and 121–126 (LSRMTF).

This sequence belongs to the RNA methyltransferase RlmH family. As to quaternary structure, homodimer.

The protein localises to the cytoplasm. It catalyses the reaction pseudouridine(1915) in 23S rRNA + S-adenosyl-L-methionine = N(3)-methylpseudouridine(1915) in 23S rRNA + S-adenosyl-L-homocysteine + H(+). In terms of biological role, specifically methylates the pseudouridine at position 1915 (m3Psi1915) in 23S rRNA. This Geotalea daltonii (strain DSM 22248 / JCM 15807 / FRC-32) (Geobacter daltonii) protein is Ribosomal RNA large subunit methyltransferase H.